A 105-amino-acid polypeptide reads, in one-letter code: Met repressor (105 aa).

This sequence belongs to the MetJ family. Homodimer.

It localises to the cytoplasm. Its function is as follows. This regulatory protein, when combined with SAM (S-adenosylmethionine) represses the expression of the methionine regulon and of enzymes involved in SAM synthesis. The chain is Met repressor from Salmonella dublin (strain CT_02021853).